The sequence spans 379 residues: UDP-4-amino-4-deoxy-L-arabinose--oxoglutarate aminotransferase (379 aa).

Residue lysine 182 is modified to N6-(pyridoxal phosphate)lysine.

The protein belongs to the DegT/DnrJ/EryC1 family. ArnB subfamily. Homodimer. Pyridoxal 5'-phosphate is required as a cofactor.

The catalysed reaction is UDP-4-amino-4-deoxy-beta-L-arabinose + 2-oxoglutarate = UDP-beta-L-threo-pentopyranos-4-ulose + L-glutamate. Its pathway is nucleotide-sugar biosynthesis; UDP-4-deoxy-4-formamido-beta-L-arabinose biosynthesis; UDP-4-deoxy-4-formamido-beta-L-arabinose from UDP-alpha-D-glucuronate: step 2/3. It functions in the pathway bacterial outer membrane biogenesis; lipopolysaccharide biosynthesis. Functionally, catalyzes the conversion of UDP-4-keto-arabinose (UDP-Ara4O) to UDP-4-amino-4-deoxy-L-arabinose (UDP-L-Ara4N). The modified arabinose is attached to lipid A and is required for resistance to polymyxin and cationic antimicrobial peptides. This is UDP-4-amino-4-deoxy-L-arabinose--oxoglutarate aminotransferase from Escherichia coli O1:K1 / APEC.